The sequence spans 197 residues: ATP-dependent Clp protease proteolytic subunit (197 aa).

Ser-98 functions as the Nucleophile in the catalytic mechanism. Residue His-123 is part of the active site.

Belongs to the peptidase S14 family. As to quaternary structure, fourteen ClpP subunits assemble into 2 heptameric rings which stack back to back to give a disk-like structure with a central cavity, resembling the structure of eukaryotic proteasomes. Forms large heterooligomeric complexes consisting of an ATPase component (ClpX, ClpC or ClpE) and a proteolytic component (ClpP).

Its subcellular location is the cytoplasm. It carries out the reaction Hydrolysis of proteins to small peptides in the presence of ATP and magnesium. alpha-casein is the usual test substrate. In the absence of ATP, only oligopeptides shorter than five residues are hydrolyzed (such as succinyl-Leu-Tyr-|-NHMec, and Leu-Tyr-Leu-|-Tyr-Trp, in which cleavage of the -Tyr-|-Leu- and -Tyr-|-Trp bonds also occurs).. Its activity is regulated as follows. Low intrinsic peptidase activity is stimulated by ATP-binding subunits ClpC, ClpE and ClpX. Activity is disregulated by acyldepsipeptides (ADEP) antibiotics, which negate the need for ATP-binding subunits for activation and which makes it into an unregulated protease. Each ClpP subunit binds 1 ADEP molecule, which prevents binding of ClpX. ADEP binding causes conformational shifts that open the gated pore of the ring. Protease activity is inhibited by diisopropylfluoro-phosphate. Protease activity is inhibited by bortezomib, an oncology drug originally designed to work on the human proteasome. In terms of biological role, cleaves peptides in various proteins in a process that requires ATP hydrolysis. Has a limited peptidase activity in the absence of ATP-binding subunits ClpC, ClpE or ClpX. Has a chymotrypsin-like activity. Plays a major role in the degradation of misfolded proteins. ClpXP is involved in the complete degradation of the site-2 clipped anti-sigma-W factor RsiW. This results in the release of SigW and the transcriptional activation of genes under the control of the sigma-W factor. Probably the major protease that degrades proteins tagged by trans-translation. The polypeptide is ATP-dependent Clp protease proteolytic subunit (Bacillus subtilis (strain 168)).